Reading from the N-terminus, the 167-residue chain is Crossover junction endodeoxyribonuclease RuvC (167 aa).

Catalysis depends on residues Asp11, Glu71, and Asp143. The Mg(2+) site is built by Asp11, Glu71, and Asp143.

Belongs to the RuvC family. As to quaternary structure, homodimer which binds Holliday junction (HJ) DNA. The HJ becomes 2-fold symmetrical on binding to RuvC with unstacked arms; it has a different conformation from HJ DNA in complex with RuvA. In the full resolvosome a probable DNA-RuvA(4)-RuvB(12)-RuvC(2) complex forms which resolves the HJ. Requires Mg(2+) as cofactor.

The protein resides in the cytoplasm. The catalysed reaction is Endonucleolytic cleavage at a junction such as a reciprocal single-stranded crossover between two homologous DNA duplexes (Holliday junction).. In terms of biological role, the RuvA-RuvB-RuvC complex processes Holliday junction (HJ) DNA during genetic recombination and DNA repair. Endonuclease that resolves HJ intermediates. Cleaves cruciform DNA by making single-stranded nicks across the HJ at symmetrical positions within the homologous arms, yielding a 5'-phosphate and a 3'-hydroxyl group; requires a central core of homology in the junction. The consensus cleavage sequence is 5'-(A/T)TT(C/G)-3'. Cleavage occurs on the 3'-side of the TT dinucleotide at the point of strand exchange. HJ branch migration catalyzed by RuvA-RuvB allows RuvC to scan DNA until it finds its consensus sequence, where it cleaves and resolves the cruciform DNA. The sequence is that of Crossover junction endodeoxyribonuclease RuvC from Hyphomonas neptunium (strain ATCC 15444).